The chain runs to 364 residues: Phosphoserine aminotransferase (364 aa).

Arg-41 serves as a coordination point for L-glutamate. Pyridoxal 5'-phosphate-binding positions include 75-76 (AS), Trp-100, Thr-155, Asp-175, and Gln-198. Lys-199 bears the N6-(pyridoxal phosphate)lysine mark. 239–240 (NT) is a pyridoxal 5'-phosphate binding site.

This sequence belongs to the class-V pyridoxal-phosphate-dependent aminotransferase family. SerC subfamily. Homodimer. It depends on pyridoxal 5'-phosphate as a cofactor.

Its subcellular location is the cytoplasm. The catalysed reaction is O-phospho-L-serine + 2-oxoglutarate = 3-phosphooxypyruvate + L-glutamate. The enzyme catalyses 4-(phosphooxy)-L-threonine + 2-oxoglutarate = (R)-3-hydroxy-2-oxo-4-phosphooxybutanoate + L-glutamate. Its pathway is amino-acid biosynthesis; L-serine biosynthesis; L-serine from 3-phospho-D-glycerate: step 2/3. Its function is as follows. Catalyzes the reversible conversion of 3-phosphohydroxypyruvate to phosphoserine and of 3-hydroxy-2-oxo-4-phosphonooxybutanoate to phosphohydroxythreonine. The sequence is that of Phosphoserine aminotransferase from Streptococcus thermophilus (strain CNRZ 1066).